Consider the following 355-residue polypeptide: uncharacterized protein (355 aa).

This sequence belongs to the serpin family. Poxviruses subfamily.

This is an uncharacterized protein from Vertebrata (FPV).